A 35-amino-acid chain; its full sequence is Thionin NsW2 (35 aa).

Cystine bridges form between Cys-4–Cys-32, Cys-12–Cys-30, and Cys-16–Cys-26.

Post-translationally, contains 4 disulfide bonds.

It localises to the secreted. In terms of biological role, antimicrobial peptide disrupting membranes. Has antibacterial against Gram-positive bacteria S.aureus (MIC=6.5 uM) and B.subtilis (MIC=3.25 uM) but not against Gram-negative bacterium E.coli. Has antifungal activity against C.albicans (MIC=3.25 uM). This Nigella sativa (Black cumin) protein is Thionin NsW2.